The following is a 482-amino-acid chain: tRNA sulfurtransferase (482 aa).

Residues 61–165 enclose the THUMP domain; that stretch reads PVIADALTRI…NDKLMLVKAR (105 aa). Residues 183 to 184, K265, G287, and Q296 contribute to the ATP site; that span reads LI. An intrachain disulfide couples C344 to C456. The region spanning 404–482 is the Rhodanese domain; the sequence is FDADQVILDI…GFTNVKVYRP (79 aa). The active-site Cysteine persulfide intermediate is the C456.

This sequence belongs to the ThiI family.

Its subcellular location is the cytoplasm. The enzyme catalyses [ThiI sulfur-carrier protein]-S-sulfanyl-L-cysteine + a uridine in tRNA + 2 reduced [2Fe-2S]-[ferredoxin] + ATP + H(+) = [ThiI sulfur-carrier protein]-L-cysteine + a 4-thiouridine in tRNA + 2 oxidized [2Fe-2S]-[ferredoxin] + AMP + diphosphate. It carries out the reaction [ThiS sulfur-carrier protein]-C-terminal Gly-Gly-AMP + S-sulfanyl-L-cysteinyl-[cysteine desulfurase] + AH2 = [ThiS sulfur-carrier protein]-C-terminal-Gly-aminoethanethioate + L-cysteinyl-[cysteine desulfurase] + A + AMP + 2 H(+). Its pathway is cofactor biosynthesis; thiamine diphosphate biosynthesis. Catalyzes the ATP-dependent transfer of a sulfur to tRNA to produce 4-thiouridine in position 8 of tRNAs, which functions as a near-UV photosensor. Also catalyzes the transfer of sulfur to the sulfur carrier protein ThiS, forming ThiS-thiocarboxylate. This is a step in the synthesis of thiazole, in the thiamine biosynthesis pathway. The sulfur is donated as persulfide by IscS. The polypeptide is tRNA sulfurtransferase (Serratia proteamaculans (strain 568)).